The following is a 382-amino-acid chain: Inactive ubiquitin-specific protease 5 (382 aa).

One can recognise a DUSP domain in the interval 16–141 (VPAEEERALI…GGPTLPRKAI (126 aa)). Residues 323-382 (TGLLNLGNTCFMNSAIQCLVHTPEFARYFREDYHREINWQNPLGMVVSTLSTSMALKPYV) form the USP domain.

Belongs to the peptidase C19 family. In terms of tissue distribution, widely expressed with the highest expression in floral organs.

It localises to the cell membrane. Plays an important role in the development of floral organs and chloroplasts. Does not possess deubiquitinating enzyme activity in vitro. The sequence is that of Inactive ubiquitin-specific protease 5 from Oryza sativa subsp. japonica (Rice).